The sequence spans 211 residues: Uridine kinase (211 aa).

12 to 19 (GGSGSGKT) is an ATP binding site.

It belongs to the uridine kinase family.

The protein resides in the cytoplasm. It carries out the reaction uridine + ATP = UMP + ADP + H(+). The catalysed reaction is cytidine + ATP = CMP + ADP + H(+). The protein operates within pyrimidine metabolism; CTP biosynthesis via salvage pathway; CTP from cytidine: step 1/3. It participates in pyrimidine metabolism; UMP biosynthesis via salvage pathway; UMP from uridine: step 1/1. The protein is Uridine kinase of Anoxybacillus flavithermus (strain DSM 21510 / WK1).